The following is a 534-amino-acid chain: Cytokinin dehydrogenase 1 (534 aa).

A signal peptide spans 1–18 (MAVVYYLLLAGLIACSHA). 3 N-linked (GlcNAc...) asparagine glycosylation sites follow: Asn-52, Asn-63, and Asn-89. Residues 65-245 (TSALPAAVLY…TRARIAVEPA (181 aa)) form the FAD-binding PCMH-type domain. The FAD site is built by Phe-100, Gly-102, Arg-103, and Gly-104. His-105 is modified (pros-8alpha-FAD histidine). Positions 106 and 110 each coordinate FAD. The N-linked (GlcNAc...) asparagine glycan is linked to Asn-134. Positions 169, 174, 180, 184, and 235 each coordinate FAD. Position 169 (Asp-169) interacts with N(6)-dimethylallyladenine. Asp-169 lines the trans-zeatin pocket. N-linked (GlcNAc...) asparagine glycosylation is found at Asn-294, Asn-323, and Asn-338. Glu-381 contacts N(6)-dimethylallyladenine. Glu-381 provides a ligand contact to trans-zeatin. Asn-434 carries N-linked (GlcNAc...) asparagine glycosylation. Residue Ser-456 participates in trans-zeatin binding. Tyr-491, Ser-527, and Gln-530 together coordinate FAD.

Belongs to the oxygen-dependent FAD-linked oxidoreductase family. Monomer. It depends on FAD as a cofactor. In terms of processing, glycosylated; with approximately 10 hexose residues per site. Expressed in immature kernels and unpollinated cobs. Weakly expressed in kernels harvested two weeks after anthesis.

It is found in the secreted. The protein localises to the extracellular space. It catalyses the reaction N(6)-dimethylallyladenine + A + H2O = 3-methyl-2-butenal + adenine + AH2. With respect to regulation, competitive inhibition by phenylureas. Functionally, catalyzes the oxidation of cytokinins, a family of N(6)-substituted adenine derivatives that are plant hormones, where the substituent is an isopentenyl group. Cleaves trans-zeatin, N(6)-dimethylallyladenine (isopentenyladenine), isopentenyladenosine, zeatin riboside and cis-zeatin, but not dihydrozeatin, kinetin and benzylaminopurine. This Zea mays (Maize) protein is Cytokinin dehydrogenase 1 (CKX1).